The sequence spans 367 residues: Cystinosin (367 aa).

The first 22 residues, 1–22 (MRRNWLLILTLFLLMFIEKYES), serve as a signal peptide directing secretion. Over 23–125 (TVSLTAPPTV…LVIHSRIVSI (103 aa)) the chain is Lumenal. Residues Asn-36, Asn-51, Asn-66, Asn-84, Asn-104, and Asn-107 are each glycosylated (N-linked (GlcNAc...) asparagine). The PQ-loop 1 domain maps to 123 to 189 (VSIINQVIGW…LLWVPYIQEE (67 aa)). A helical membrane pass occupies residues 126 to 150 (INQVIGWIYFMAWSVSFYPQVIQNW). At 151-159 (RRKSVIGLS) the chain is on the cytoplasmic side. Residues 160-179 (FDFLALNLTGFVAYSVFNIG) traverse the membrane as a helical segment. L-cystine is bound at residue Asn-166. The Lumenal portion of the chain corresponds to 180–202 (LLWVPYIQEEFLLKYPNGVNPVD). The chain crosses the membrane as a helical span at residues 203-225 (SNDAFFSLHAVALTLIVILQCCL). Asp-205 contacts H(+). Residues 226 to 234 (YERGNQRVS) are Cytoplasmic-facing. Residues 235-257 (WPSIGFLVLAWLFVLVTMIVAAV) traverse the membrane as a helical segment. The Lumenal segment spans residues 258-263 (GITTWL). Positions 263-328 (LQFLFCFSYI…QSYNNDQWTL (66 aa)) constitute a PQ-loop 2 domain. Residues 264 to 289 (QFLFCFSYIKLIITLIKYFPQAYMNF) form a helical membrane-spanning segment. L-cystine is bound by residues Lys-273, Lys-280, and Tyr-281. Over 290–298 (YYKSTKGWS) the chain is Cytoplasmic. Residues 299 to 308 (IGGVLLDFTG) traverse the membrane as a helical segment. Residue Asp-305 coordinates L-cystine. Asp-305 is a H(+) binding site. The Lumenal segment spans residues 309–331 (GSFSLLQMFLQSYNNDQWTLIFG). Residues 332–354 (DPTKFGLGVFTIFFDVVFFIQHF) traverse the membrane as a helical segment. Position 346 (Asp-346) interacts with H(+). The Cytoplasmic segment spans residues 355–367 (YLYRKKPGYDQLN). Residues 362–366 (GYDQL) carry the Lysosomal targeting motif motif.

The protein belongs to the cystinosin family. Interacts with components of the V-ATPase complex. Interacts with components of the Ragulator complex. Interacts with RRAGA/RagA and RRAGC/RagC. Interacts with AP-3 complex subunit mu (AP3M1 or AP3M2).

It is found in the lysosome membrane. The protein localises to the melanosome membrane. It carries out the reaction L-cystine(out) + H(+)(out) = L-cystine(in) + H(+)(in). With respect to regulation, switches between a lumen- and a cytosol-open conformation: pH induces conformational changes and shifts the equilibrium to facilitate the transition between the lumen- and cytosol-open conformation, thereby promoting cystine transport. Protonation of specific aspartate residues (Asp-205, Asp-305 and Asp-346) favors the cytosol-open conformation. Its function is as follows. Cystine/H(+) symporter that mediates export of cystine, the oxidized dimer of cysteine, from lysosomes. Plays an important role in melanin synthesis by catalyzing cystine export from melanosomes, possibly by inhibiting pheomelanin synthesis. In addition to cystine export, also acts as a positive regulator of mTORC1 signaling in kidney proximal tubular cells, via interactions with components of the v-ATPase and Ragulator complexes. Also involved in small GTPase-regulated vesicle trafficking and lysosomal localization of LAMP2A, independently of cystine transporter activity. The sequence is that of Cystinosin from Mus musculus (Mouse).